The primary structure comprises 172 residues: RNA pyrophosphohydrolase (172 aa).

The Nudix hydrolase domain occupies 6–149; that stretch reads GFRANVGIII…KRDVYRKVMK (144 aa). Positions 38-59 match the Nudix box motif; it reads GGLDDGESVEEAMYRELYEEVG.

The protein belongs to the Nudix hydrolase family. RppH subfamily. It depends on a divalent metal cation as a cofactor.

In terms of biological role, accelerates the degradation of transcripts by removing pyrophosphate from the 5'-end of triphosphorylated RNA, leading to a more labile monophosphorylated state that can stimulate subsequent ribonuclease cleavage. This Shewanella frigidimarina (strain NCIMB 400) protein is RNA pyrophosphohydrolase.